The following is a 107-amino-acid chain: NADH-quinone oxidoreductase subunit K (107 aa).

A run of 3 helical transmembrane segments spans residues 11–31 (LTHY…GVLL), 36–56 (IVLL…FVAF), and 67–87 (IMVF…LALA).

It belongs to the complex I subunit 4L family. As to quaternary structure, NDH-1 is composed of 14 different subunits. Subunits NuoA, H, J, K, L, M, N constitute the membrane sector of the complex.

Its subcellular location is the cell inner membrane. It catalyses the reaction a quinone + NADH + 5 H(+)(in) = a quinol + NAD(+) + 4 H(+)(out). Its function is as follows. NDH-1 shuttles electrons from NADH, via FMN and iron-sulfur (Fe-S) centers, to quinones in the respiratory chain. The immediate electron acceptor for the enzyme in this species is believed to be ubiquinone. Couples the redox reaction to proton translocation (for every two electrons transferred, four hydrogen ions are translocated across the cytoplasmic membrane), and thus conserves the redox energy in a proton gradient. This Bdellovibrio bacteriovorus (strain ATCC 15356 / DSM 50701 / NCIMB 9529 / HD100) protein is NADH-quinone oxidoreductase subunit K.